Here is a 536-residue protein sequence, read N- to C-terminus: Pre-mRNA-splicing factor SLU7 (536 aa).

A disordered region spans residues 22-42; sequence EARKAGLAPAEVDEDGKEINP. The CCHC-type zinc finger occupies 94–111; the sequence is GACENCGAMTHDKKSCME. The disordered stretch occupies residues 178–201; that stretch reads KLEEKDGEEGDENVASEEEDEEDG. A compositionally biased stretch (acidic residues) spans 182–200; sequence KDGEEGDENVASEEEDEED.

This sequence belongs to the SLU7 family.

It is found in the nucleus. Functionally, participates in the second catalytic step of pre-mRNA splicing, when the free hydroxyl group of exon I attacks the 3'-splice site to generate spliced mRNA and the excised lariat intron. This chain is Pre-mRNA-splicing factor SLU7, found in Oryza sativa subsp. indica (Rice).